Consider the following 199-residue polypeptide: Lysine exporter LysE (199 aa).

Helical transmembrane passes span 6 to 26 (VVGF…NAFV), 42 to 62 (LCTV…GALI), 68 to 88 (ALNV…LLAA), 144 to 164 (WLFG…LGFG), and 178 to 198 (WRIL…SLTV).

This sequence belongs to the LysE/ArgO transporter (TC 2.A.75) family.

The protein resides in the cell inner membrane. Its function is as follows. Catalyzes the efflux of L-lysine. The chain is Lysine exporter LysE from Mycobacterium bovis (strain ATCC BAA-935 / AF2122/97).